The sequence spans 210 residues: Cilia- and flagella-associated protein 418 (210 aa).

A required for interaction with FAM161A region spans residues 1–77; the sequence is MAKDLDELLD…LINEIFEEPN (77 aa). The disordered stretch occupies residues 24–59; that stretch reads LDLGERPKGGSGGGGTHSGDRNGAQEKDTLRSTETF. The segment covering 41 to 59 has biased composition (basic and acidic residues); sequence SGDRNGAQEKDTLRSTETF.

In terms of assembly, interacts (via N-terminus) with FAM161A (via central region); the interaction is direct.

It is found in the cytoplasm. It localises to the photoreceptor inner segment. May be involved in photoreceptor outer segment disk morphogenesis. The chain is Cilia- and flagella-associated protein 418 from Rattus norvegicus (Rat).